The following is a 562-amino-acid chain: MAQQMGNQPLIVLSEDSQRTSGEDAQSMNITAGKAVAESVRTTLGPKGMDKMLVDSSGEVVVTNDGVTILKEMDIEHPAANMIVEVAETQETEVGDGTTTSVVVSGELLSEAETLLEQDIHATTLAQGYRQAAEKAKELLDDAAIDVSADDTETLEKIAATAMTGKGAENAKGVLSDLVVRAVQSVADDNDVDTDNVKVEKVTGGAIENSELIEGVIVDKERVSENMPYAVEDANIALVDDGLEVQETEIDTEVNVTDPDQLQNFLDQEEEQLKEMVDALKDAGANVVFADSGIDDMAQHYLAKEGILAVRRAKSDDFTRLSRATGATPVSNVNDIEAADLGAAGSVAQKDIGGDERIFVEDVEEAKSVTLILRGGTEHVVDEVERAIEDSLGVVRVTLEDGQVMPGGGAPETELAMQLRDFADSVGGREQLAVEAFADALEVIPRTLAENAGHDPIDSLVDLRSQHDGGDTEAGLDAYNGDVIDMESEGIVEPLRVKTQAIESATEAATMILRIDDVIAAGDLAGGQVGDDDGDDGPAGGPGGMGGGMGGMGGMGGMGGAM.

Disordered stretches follow at residues 1–23 and 526–551; these read MAQQMGNQPLIVLSEDSQRTSGE and GGQVGDDDGDDGPAGGPGGMGGGMGG. Residues 537 to 551 show a composition bias toward gly residues; it reads GPAGGPGGMGGGMGG.

The protein belongs to the TCP-1 chaperonin family. As to quaternary structure, forms an oligomeric complex of eight-membered rings.

Functionally, molecular chaperone; binds unfolded polypeptides in vitro, and has a weak ATPase activity. This chain is Thermosome subunit alpha (thsA), found in Halobacterium salinarum (strain ATCC 700922 / JCM 11081 / NRC-1) (Halobacterium halobium).